An 89-amino-acid polypeptide reads, in one-letter code: UPF0237 protein DIP1286 (89 aa).

The ACT domain maps to 4–78 (IISVTGADHT…KDQNLVIRIQ (75 aa)).

Belongs to the UPF0237 family.

This is UPF0237 protein DIP1286 from Corynebacterium diphtheriae (strain ATCC 700971 / NCTC 13129 / Biotype gravis).